The primary structure comprises 356 residues: 3-dehydroquinate synthase (356 aa).

Residues 69–74, 103–107, 127–128, lysine 140, lysine 149, and 167–170 each bind NAD(+); these read DGEKFK, GVIGD, TT, and CLKT. Zn(2+) contacts are provided by glutamate 182, histidine 245, and histidine 262.

The protein belongs to the sugar phosphate cyclases superfamily. Dehydroquinate synthase family. It depends on Co(2+) as a cofactor. Requires Zn(2+) as cofactor. NAD(+) is required as a cofactor.

It localises to the cytoplasm. It carries out the reaction 7-phospho-2-dehydro-3-deoxy-D-arabino-heptonate = 3-dehydroquinate + phosphate. It participates in metabolic intermediate biosynthesis; chorismate biosynthesis; chorismate from D-erythrose 4-phosphate and phosphoenolpyruvate: step 2/7. Functionally, catalyzes the conversion of 3-deoxy-D-arabino-heptulosonate 7-phosphate (DAHP) to dehydroquinate (DHQ). This chain is 3-dehydroquinate synthase, found in Psychromonas ingrahamii (strain DSM 17664 / CCUG 51855 / 37).